The sequence spans 664 residues: uncharacterized protein (664 aa).

The signal sequence occupies residues 1–35 (MGVSVLTFHVSLFLKRILSIAFFLLSLSTLLRIVN). Asn101 and Asn138 each carry an N-linked (GlcNAc...) asparagine glycan. Sel1-like repeat units follow at residues 141–178 (AFANNMMGFFYSTSFSEYASNNPALARIHWELAAKQGS) and 179–214 (LDAHQFLAYHNLIALNMPQSDEEAVKHYKFISDHLF). Asn221, Asn300, and Asn371 each carry an N-linked (GlcNAc...) asparagine glycan. Sel1-like repeat units lie at residues 337–372 (AQSCGYLGLLHLFDKGPLFDIDKAYWWFKRGATKND), 373–409 (SNSYYGLGYMAYHGLTSNGVDREKGMRLINLAVMNEN), 410–441 (PHALMFLGLIRLEEARYEEAYHLFLRAATQKS), and 442–477 (VISYKYLADCYYNGTGTSRSMISASLYYKKFVEAIR). Residues Asn454 and Asn537 are each glycosylated (N-linked (GlcNAc...) asparagine). Sel1-like repeat units follow at residues 564–599 (IDAIFKLGDYYYYGIGTPKDYSKAYTCYKIAYEQSS) and 601–636 (GMGLWNMAYMHEYGIGRDQDIYIARRLLDELSSNQN).

Belongs to the sel-1 family.

This is an uncharacterized protein from Schizosaccharomyces pombe (strain 972 / ATCC 24843) (Fission yeast).